The primary structure comprises 278 residues: Complement C1q tumor necrosis factor-related protein 6 (278 aa).

Positions 1–46 are cleaved as a signal peptide; sequence MQWLRVRESPGEATGHRVTMGTAALGPVWAALLLFLLMCEIPMVEL. N-linked (GlcNAc...) asparagine glycosylation occurs at Asn-91. The Collagen-like domain occupies 97–138; sequence GDKGDPGPMGLPGYMGREGPQGEPGPQGSKGDKGEMGSPGAP. The interval 99-135 is disordered; the sequence is KGDPGPMGLPGYMGREGPQGEPGPQGSKGDKGEMGSP. One can recognise a C1q domain in the interval 139 to 259; the sequence is CQKRFFAFSV…KRQRENAIYS (121 aa).

Its subcellular location is the secreted. The protein is Complement C1q tumor necrosis factor-related protein 6 (C1QTNF6) of Homo sapiens (Human).